The primary structure comprises 271 residues: Proteasome inhibitor PI31 subunit (271 aa).

Residue Ala2 is modified to N-acetylalanine. Residues 2–150 (AGLEVLFASA…PIHEQWEKAN (149 aa)) are important for homodimerization and interaction with FBXO7. Ser153 carries the post-translational modification Phosphoserine. Arg205 is subject to Omega-N-methylarginine. Residue Arg219 is modified to Asymmetric dimethylarginine. The segment at 222-271 (IDPSSGLPNRLPPGAVPPGARFDPFGPIGTSPPGPNPDHLPPPGYDDMYL) is disordered. The residue at position 231 (Arg231) is an Omega-N-methylarginine. Over residues 251-265 (TSPPGPNPDHLPPPG) the composition is skewed to pro residues. Ser252 carries the post-translational modification Phosphoserine.

This sequence belongs to the proteasome inhibitor PI31 family. In terms of assembly, monomer and homodimer. Interacts with FBXO7. Interacts with the 20S proteasome.

The protein resides in the cytoplasm. It is found in the endoplasmic reticulum. Functionally, plays an important role in control of proteasome function. Inhibits the hydrolysis of protein and peptide substrates by the 20S proteasome. Also inhibits the activation of the proteasome by the proteasome regulatory proteins PA700 and PA28. This chain is Proteasome inhibitor PI31 subunit (PSMF1), found in Homo sapiens (Human).